Reading from the N-terminus, the 213-residue chain is Pyridoxine/pyridoxamine 5'-phosphate oxidase (213 aa).

Substrate-binding positions include 8-11 (RREY) and K66. FMN contacts are provided by residues 61–66 (RIVLLK), 76–77 (YT), R82, K83, and Q105. Residues Y123, R127, and S131 each contribute to the substrate site. FMN is bound by residues 140 to 141 (QS) and W185. 191-193 (RLH) contacts substrate. R195 is a binding site for FMN.

Belongs to the pyridoxamine 5'-phosphate oxidase family. Homodimer. The cofactor is FMN.

It catalyses the reaction pyridoxamine 5'-phosphate + O2 + H2O = pyridoxal 5'-phosphate + H2O2 + NH4(+). The enzyme catalyses pyridoxine 5'-phosphate + O2 = pyridoxal 5'-phosphate + H2O2. It participates in cofactor metabolism; pyridoxal 5'-phosphate salvage; pyridoxal 5'-phosphate from pyridoxamine 5'-phosphate: step 1/1. It functions in the pathway cofactor metabolism; pyridoxal 5'-phosphate salvage; pyridoxal 5'-phosphate from pyridoxine 5'-phosphate: step 1/1. Its function is as follows. Catalyzes the oxidation of either pyridoxine 5'-phosphate (PNP) or pyridoxamine 5'-phosphate (PMP) into pyridoxal 5'-phosphate (PLP). The polypeptide is Pyridoxine/pyridoxamine 5'-phosphate oxidase (Pseudoalteromonas atlantica (strain T6c / ATCC BAA-1087)).